A 236-amino-acid chain; its full sequence is MICOS complex subunit MIC25 (236 aa).

Over residues 1–11 (MGSAESREGRR) the composition is skewed to basic and acidic residues. The interval 1 to 22 (MGSAESREGRRASFGMDEEERV) is disordered. G2 is lipidated: N-myristoyl glycine. 2 positions are modified to phosphoserine: S13 and S31. Disordered stretches follow at residues 34–86 (VVNR…VQVD) and 109–132 (EREA…DQEK). A compositionally biased stretch (low complexity) spans 48–58 (GLLAPPAAALG). Composition is skewed to basic and acidic residues over residues 62–71 (GREKDSKPPR) and 122–132 (RRGEGGVDQEK). Residues 127 to 167 (GVDQEKQRLAQRARELESQEEELRCRDAFYKEQLGRLERQN) adopt a coiled-coil conformation. The region spanning 195–236 (EPVCSGLQAQILRCYRDRLQEVLLCADLVRAYQHCVSSAHKG) is the CHCH domain. 2 consecutive short sequence motifs (cx9C motif) follow at residues 198-208 (CSGLQAQILRC) and 219-229 (CADLVRAYQHC). 2 disulfides stabilise this stretch: C198/C229 and C208/C219.

It belongs to the MICOS complex subunit Mic19 family. Metazoan Mic25 subfamily. Component of the mitochondrial contact site and cristae organizing system (MICOS) complex, composed of at least MICOS10/MIC10, CHCHD3/MIC19, CHCHD6/MIC25, APOOL/MIC27, IMMT/MIC60, APOO/MIC23/MIC26 and MICOS13/MIC13. This complex was also known under the names MINOS or MitOS complex. The MICOS complex associates with mitochondrial outer membrane proteins SAMM50, MTX1 and MTX2 (together described as components of the mitochondrial outer membrane sorting assembly machinery (SAM) complex) and DNAJC11, mitochondrial inner membrane protein TMEM11 and with HSPA9. The MICOS and SAM complexes together with DNAJC11 are part of a large protein complex spanning both membranes termed the mitochondrial intermembrane space bridging (MIB) complex. Interacts with DISC1. Interacts with IMMT/MIC60.

It is found in the mitochondrion inner membrane. Its subcellular location is the mitochondrion. Component of the MICOS complex, a large protein complex of the mitochondrial inner membrane that plays crucial roles in the maintenance of crista junctions, inner membrane architecture, and formation of contact sites to the outer membrane. This chain is MICOS complex subunit MIC25 (CHCHD6), found in Bos taurus (Bovine).